Here is a 319-residue protein sequence, read N- to C-terminus: COP9 signalosome complex subunit 6 (319 aa).

The MPN domain occupies 33-166 (VALHPLVILN…VSVYESVIDI (134 aa)).

This sequence belongs to the peptidase M67A family. CSN6 subfamily. In terms of assembly, component of the CSN complex, probably composed of cops1, cops2, cops3, cops4, cops5, cops6, cops7, cops8 and cops9.

Its subcellular location is the cytoplasm. It is found in the nucleus. Component of the COP9 signalosome complex (CSN), a complex involved in various cellular and developmental processes. The CSN complex is an essential regulator of the ubiquitin (Ubl) conjugation pathway by mediating the deneddylation of the cullin subunits of E3 ligase complexes, leading to modify the Ubl ligase activity. In Xenopus tropicalis (Western clawed frog), this protein is COP9 signalosome complex subunit 6 (cops6).